A 347-amino-acid chain; its full sequence is CD5 antigen-like (347 aa).

Residues 1 to 19 form the signal peptide; the sequence is MALLFSLILAICTRPGFLA. SRCR domains are found at residues 24–125, 138–239, and 244–346; these read VRLV…ASCE, VRLA…VECE, and LRLV…VICS. 11 cysteine pairs are disulfide-bonded: C33–C67, C49–C114, C62–C124, C96–C106, C163–C228, C176–C238, C208–C218, C253–C287, C269–C335, C282–C345, and C315–C325.

As to quaternary structure, interacts with FASN; the interaction is direct. Interacts (via SRCR2 and SRCR3) with pentameric IgM (via Fc region); disulfide-linked. Not N-glycosylated. Probably not O-glycosylated. In terms of tissue distribution, expressed in spleen, lymph node, thymus, bone marrow, and fetal liver, but not in non-lymphoid tissues.

The protein resides in the secreted. Its subcellular location is the cytoplasm. Functionally, secreted protein that acts as a key regulator of lipid synthesis: mainly expressed by macrophages in lymphoid and inflamed tissues and regulates mechanisms in inflammatory responses, such as infection or atherosclerosis. Able to inhibit lipid droplet size in adipocytes. Following incorporation into mature adipocytes via CD36-mediated endocytosis, associates with cytosolic FASN, inhibiting fatty acid synthase activity and leading to lipolysis, the degradation of triacylglycerols into glycerol and free fatty acids (FFA). CD5L-induced lipolysis occurs with progression of obesity: participates in obesity-associated inflammation following recruitment of inflammatory macrophages into adipose tissues, a cause of insulin resistance and obesity-related metabolic disease. Regulation of intracellular lipids mediated by CD5L has a direct effect on transcription regulation mediated by nuclear receptors ROR-gamma (RORC). Acts as a key regulator of metabolic switch in T-helper Th17 cells. Regulates the expression of pro-inflammatory genes in Th17 cells by altering the lipid content and limiting synthesis of cholesterol ligand of RORC, the master transcription factor of Th17-cell differentiation. CD5L is mainly present in non-pathogenic Th17 cells, where it decreases the content of polyunsaturated fatty acyls (PUFA), affecting two metabolic proteins MSMO1 and CYP51A1, which synthesize ligands of RORC, limiting RORC activity and expression of pro-inflammatory genes. Participates in obesity-associated autoimmunity via its association with IgM, interfering with the binding of IgM to Fcalpha/mu receptor and enhancing the development of long-lived plasma cells that produce high-affinity IgG autoantibodies. Also acts as an inhibitor of apoptosis in macrophages: promotes macrophage survival from the apoptotic effects of oxidized lipids in case of atherosclerosis. Involved in early response to microbial infection against various pathogens by acting as a pattern recognition receptor and by promoting autophagy. The chain is CD5 antigen-like (CD5L) from Homo sapiens (Human).